We begin with the raw amino-acid sequence, 53 residues long: MLSWAITFLIIAIVAAVLGFGGIAGAATGIAKILFIVFLVLFVASFFFGRGRG.

Helical transmembrane passes span 4–24 (WAITFLIIAIVAAVLGFGGIA) and 29–49 (GIAKILFIVFLVLFVASFFFG).

This sequence belongs to the UPF0391 family.

It is found in the cell membrane. The polypeptide is UPF0391 membrane protein PputGB1_0151 (Pseudomonas putida (strain GB-1)).